The chain runs to 133 residues: Interferon-induced transmembrane protein 3 (133 aa).

The Cytoplasmic portion of the chain corresponds to 1–57; it reads MNHTVQTFFSPVNSGQPPNYEMLKEEHEVAVLGAPHNPAPPTSTVIHIRSETSVPDH. Y20 is modified (phosphotyrosine). Residue K24 forms a Glycyl lysine isopeptide (Lys-Gly) (interchain with G-Cter in ubiquitin) linkage. The helical intramembrane region spans 58 to 78; sequence VVWSLFNTLFMNPCCLGFIAF. Positions 60–93 are interaction with SPP1; it reads WSLFNTLFMNPCCLGFIAFAYSVKSRDRKMVGDV. S-palmitoyl cysteine attachment occurs at residues C71 and C72. The Cytoplasmic portion of the chain corresponds to 79–107; sequence AYSVKSRDRKMVGDVTGAQAYASTAKCLN. Glycyl lysine isopeptide (Lys-Gly) (interchain with G-Cter in ubiquitin) cross-links involve residues K83, K88, and K104. C105 is lipidated: S-palmitoyl cysteine. A helical transmembrane segment spans residues 108-128; that stretch reads IWALILGILMTILLIVIPVLI. The segment at 108 to 133 is interaction with VAPA; it reads IWALILGILMTILLIVIPVLIFQAYG. Residues 129–133 lie on the Extracellular side of the membrane; it reads FQAYG.

This sequence belongs to the CD225/Dispanin family. Interacts with ATP6V0B. Interacts with CD81. Interacts with SPP1; the interaction reduces OPN expression. Interacts with VAPA. Interacts with BRI3 (isoforms 1 and 2); the interaction with isoform 2 is weaker than with isoform 1. In terms of processing, palmitoylation on membrane-proximal cysteines controls clustering in membrane compartments and antiviral activity against influenza virus and hepatitis C virus (HCV). Has no effect on anti-SARS-CoV-2 activity. Not glycosylated. Post-translationally, polyubiquitinated with both 'Lys-48' and 'Lys-63' linkages. Ubiquitination negatively regulates antiviral activity. Lys-24 is the most prevalent ubiquitination site. In terms of processing, phosphorylation at Tyr-20 is required for endosomal and lysosomal location.

It localises to the cell membrane. It is found in the late endosome membrane. Its subcellular location is the early endosome membrane. The protein resides in the lysosome membrane. The protein localises to the cytoplasm. It localises to the perinuclear region. Its function is as follows. IFN-induced antiviral protein which disrupts intracellular cholesterol homeostasis. Inhibits the entry of viruses to the host cell cytoplasm by preventing viral fusion with cholesterol depleted endosomes. May inactivate new enveloped viruses which buds out of the infected cell, by letting them go out with a cholesterol depleted membrane. Active against multiple viruses, including influenza A virus, SARS coronaviruses (SARS-CoV and SARS-CoV-2), Marburg virus (MARV), Ebola virus (EBOV), Dengue virus (DNV), West Nile virus (WNV), human immunodeficiency virus type 1 (HIV-1), hepatitis C virus (HCV) and vesicular stomatitis virus (VSV). Can inhibit: influenza virus hemagglutinin protein-mediated viral entry, MARV and EBOV GP1,2-mediated viral entry, SARS-CoV and SARS-CoV-2 S protein-mediated viral entry and VSV G protein-mediated viral entry. Plays a critical role in the structural stability and function of vacuolar ATPase (v-ATPase). Establishes physical contact with the v-ATPase of endosomes which is critical for proper clathrin localization and is also required for the function of the v-ATPase to lower the pH in phagocytic endosomes thus establishing an antiviral state. In hepatocytes, IFITM proteins act in a coordinated manner to restrict HCV infection by targeting the endocytosed HCV virion for lysosomal degradation. IFITM2 and IFITM3 display anti-HCV activity that may complement the anti-HCV activity of IFITM1 by inhibiting the late stages of HCV entry, possibly in a coordinated manner by trapping the virion in the endosomal pathway and targeting it for degradation at the lysosome. Exerts opposing activities on SARS-CoV-2, including amphipathicity-dependent restriction of virus at endosomes and amphipathicity-independent enhancement of infection at the plasma membrane. The sequence is that of Interferon-induced transmembrane protein 3 from Homo sapiens (Human).